An 88-amino-acid chain; its full sequence is Augerpeptide Hhe9a (88 aa).

Positions 1 to 21 (MMTKTGLVLLFAFLLVFPVSS) are cleaved as a signal peptide. The propeptide occupies 22–49 (LPMDAEAGHARLEMDKRDAGNEAWTRLL). Intrachain disulfides connect cysteine 56-cysteine 71, cysteine 61-cysteine 73, and cysteine 67-cysteine 86.

In terms of tissue distribution, expressed by the venom duct.

The protein resides in the secreted. The sequence is that of Augerpeptide Hhe9a from Hastula hectica (Sea snail).